The primary structure comprises 85 residues: Cell division topological specificity factor (85 aa).

The protein belongs to the MinE family.

Functionally, prevents the cell division inhibition by proteins MinC and MinD at internal division sites while permitting inhibition at polar sites. This ensures cell division at the proper site by restricting the formation of a division septum at the midpoint of the long axis of the cell. The chain is Cell division topological specificity factor from Shewanella amazonensis (strain ATCC BAA-1098 / SB2B).